The following is a 124-amino-acid chain: CD59 glycoprotein (124 aa).

Positions 1–24 (MTSRGVHLLLRLLFLLAVFYSSDS) are cleaved as a signal peptide. The UPAR/Ly6 domain maps to 25 to 101 (SLMCYHCLLP…DLCNGPEDDG (77 aa)). Intrachain disulfides connect Cys-28–Cys-51, Cys-31–Cys-38, Cys-44–Cys-64, Cys-70–Cys-88, and Cys-89–Cys-94. N-linked (GlcNAc...) asparagine glycosylation is present at Asn-37. Gly-101 carries GPI-anchor amidated glycine lipidation. Positions 102–124 (TALTGRTVLLVAPLLAAARNLCL) are cleaved as a propeptide — removed in mature form.

As to quaternary structure, interacts with T-cell surface antigen CD2. In terms of processing, N- and O-glycosylated.

It is found in the cell membrane. Its subcellular location is the secreted. In terms of biological role, potent inhibitor of the complement membrane attack complex (MAC) action, which protects self-cells from damage during complement activation. Acts by binding to the beta-haipins of C8 (C8A and C8B) components of the assembling MAC, forming an intermolecular beta-sheet that prevents incorporation of the multiple copies of C9 required for complete formation of the osmolytic pore. This Oryctolagus cuniculus (Rabbit) protein is CD59 glycoprotein.